We begin with the raw amino-acid sequence, 387 residues long: S-adenosylmethionine synthase (387 aa).

His17 is an ATP binding site. Asp19 provides a ligand contact to Mg(2+). Residue Glu45 coordinates K(+). Glu58 and Gln101 together coordinate L-methionine. The interval 101–111 (QSPDIAQGVDR) is flexible loop. ATP contacts are provided by residues 168 to 170 (DAK), 234 to 235 (RF), Asp243, 249 to 250 (RK), Ala266, and Lys270. Asp243 contributes to the L-methionine binding site. Lys274 contributes to the L-methionine binding site.

It belongs to the AdoMet synthase family. Homotetramer; dimer of dimers. Mg(2+) serves as cofactor. It depends on K(+) as a cofactor.

It is found in the cytoplasm. The catalysed reaction is L-methionine + ATP + H2O = S-adenosyl-L-methionine + phosphate + diphosphate. Its pathway is amino-acid biosynthesis; S-adenosyl-L-methionine biosynthesis; S-adenosyl-L-methionine from L-methionine: step 1/1. Its function is as follows. Catalyzes the formation of S-adenosylmethionine (AdoMet) from methionine and ATP. The overall synthetic reaction is composed of two sequential steps, AdoMet formation and the subsequent tripolyphosphate hydrolysis which occurs prior to release of AdoMet from the enzyme. The polypeptide is S-adenosylmethionine synthase (Bordetella bronchiseptica (strain ATCC BAA-588 / NCTC 13252 / RB50) (Alcaligenes bronchisepticus)).